Consider the following 180-residue polypeptide: Adenine phosphoribosyltransferase (180 aa).

A2 bears the N-acetylalanine mark. Residues S15 and S30 each carry the phosphoserine modification. At Y60 the chain carries Phosphotyrosine. S66 carries the phosphoserine modification. K114 is modified (N6-acetyllysine). T135 carries the phosphothreonine modification.

This sequence belongs to the purine/pyrimidine phosphoribosyltransferase family. As to quaternary structure, homodimer.

It is found in the cytoplasm. It catalyses the reaction AMP + diphosphate = 5-phospho-alpha-D-ribose 1-diphosphate + adenine. It participates in purine metabolism; AMP biosynthesis via salvage pathway; AMP from adenine: step 1/1. Functionally, catalyzes a salvage reaction resulting in the formation of AMP, that is energically less costly than de novo synthesis. This Dipodillus campestris (North African gerbil) protein is Adenine phosphoribosyltransferase.